We begin with the raw amino-acid sequence, 154 residues long: Lipoprotein signal peptidase (154 aa).

Transmembrane regions (helical) follow at residues 4-24 (IIIPIITILLIALDQLSKLWI), 62-82 (LFTLITIFVVGVAIIYLMKHI), and 84-104 (GSYWLLISLTLIISGGLGNFI). Residues aspartate 114 and aspartate 130 contribute to the active site. Residues 125–145 (IFNVADSYLTIGIICLMIALW) traverse the membrane as a helical segment.

It belongs to the peptidase A8 family.

The protein localises to the cell membrane. It catalyses the reaction Release of signal peptides from bacterial membrane prolipoproteins. Hydrolyzes -Xaa-Yaa-Zaa-|-(S,diacylglyceryl)Cys-, in which Xaa is hydrophobic (preferably Leu), and Yaa (Ala or Ser) and Zaa (Gly or Ala) have small, neutral side chains.. It functions in the pathway protein modification; lipoprotein biosynthesis (signal peptide cleavage). In terms of biological role, this protein specifically catalyzes the removal of signal peptides from prolipoproteins. The sequence is that of Lipoprotein signal peptidase from Streptococcus agalactiae serotype V (strain ATCC BAA-611 / 2603 V/R).